The sequence spans 287 residues: DegV domain-containing protein DR_0500 (287 aa).

The 274-residue stretch at 7–280 folds into the DegV domain; sequence FAVVTDGGLD…PRALGVAAAP (274 aa). Positions 62 and 93 each coordinate hexadecanoate.

Functionally, may bind long-chain fatty acids, such as palmitate, and may play a role in lipid transport or fatty acid metabolism. The protein is DegV domain-containing protein DR_0500 of Deinococcus radiodurans (strain ATCC 13939 / DSM 20539 / JCM 16871 / CCUG 27074 / LMG 4051 / NBRC 15346 / NCIMB 9279 / VKM B-1422 / R1).